Consider the following 200-residue polypeptide: Small ribosomal subunit protein uS4 (200 aa).

Positions 22-42 (TGKELEKRPYAPGPHGPNQRK) are disordered. The region spanning 92-152 (ARLDNLVYRM…EKSRNLAVIK (61 aa)) is the S4 RNA-binding domain.

It belongs to the universal ribosomal protein uS4 family. As to quaternary structure, part of the 30S ribosomal subunit. Contacts protein S5. The interaction surface between S4 and S5 is involved in control of translational fidelity.

One of the primary rRNA binding proteins, it binds directly to 16S rRNA where it nucleates assembly of the body of the 30S subunit. In terms of biological role, with S5 and S12 plays an important role in translational accuracy. This chain is Small ribosomal subunit protein uS4, found in Bacillus cytotoxicus (strain DSM 22905 / CIP 110041 / 391-98 / NVH 391-98).